The sequence spans 247 residues: uncharacterized protein (247 aa).

This is an uncharacterized protein from Acanthamoeba polyphaga (Amoeba).